Reading from the N-terminus, the 341-residue chain is Phosphate acyltransferase (341 aa).

This sequence belongs to the PlsX family. Homodimer. Probably interacts with PlsY.

The protein resides in the cytoplasm. It catalyses the reaction a fatty acyl-[ACP] + phosphate = an acyl phosphate + holo-[ACP]. The protein operates within lipid metabolism; phospholipid metabolism. Its function is as follows. Catalyzes the reversible formation of acyl-phosphate (acyl-PO(4)) from acyl-[acyl-carrier-protein] (acyl-ACP). This enzyme utilizes acyl-ACP as fatty acyl donor, but not acyl-CoA. The protein is Phosphate acyltransferase of Nostoc sp. (strain PCC 7120 / SAG 25.82 / UTEX 2576).